Here is a 115-residue protein sequence, read N- to C-terminus: Large ribosomal subunit protein bL19 (115 aa).

The protein belongs to the bacterial ribosomal protein bL19 family.

This protein is located at the 30S-50S ribosomal subunit interface and may play a role in the structure and function of the aminoacyl-tRNA binding site. The sequence is that of Large ribosomal subunit protein bL19 from Bacillus licheniformis (strain ATCC 14580 / DSM 13 / JCM 2505 / CCUG 7422 / NBRC 12200 / NCIMB 9375 / NCTC 10341 / NRRL NRS-1264 / Gibson 46).